The following is a 1018-amino-acid chain: Pleckstrin homology domain-containing family M member 2 (1018 aa).

Met1 bears the N-acetylmethionine mark. The segment at Met1 to Leu289 is interaction with KIF5B. The 123-residue stretch at Arg36–Pro158 folds into the RUN domain. Disordered regions lie at residues Ser210–Leu367, Thr407–Leu440, Glu452–Leu520, Glu526–Thr545, and Asp555–Ser583. Residues Ser230 to Pro245 are compositionally biased toward low complexity. Positions Glu258–Thr270 are enriched in polar residues. Residues Val294 to Thr306 are compositionally biased toward basic residues. Composition is skewed to polar residues over residues His316–Gly325 and Val347–Leu367. Ser423 carries the post-translational modification Phosphoserine. Residues Thr770–Ser872 form the PH domain.

In terms of assembly, interacts with KLC2 (via TPR repeats). Interacts with KIF5B. Interacts with BORCS5. Interacts (via RUN domain) with ARL8B (GTP-bound form); PLEKHM1 and PLEKHM2 compete for interaction with ARL8B. Interacts with ARL8A.

Its subcellular location is the cytoplasm. It is found in the lysosome membrane. Its function is as follows. Plays a role in lysosomes movement and localization at the cell periphery acting as an effector of ARL8B. Required for ARL8B to exert its effects on lysosome location, recruits kinesin-1 to lysosomes and hence direct their movement toward microtubule plus ends. Binding to ARL8B provides a link from lysosomal membranes to plus-end-directed motility. Critical factor involved in NK cell-mediated cytotoxicity. Drives the polarization of cytolytic granules and microtubule-organizing centers (MTOCs) toward the immune synapse between effector NK lymphocytes and target cells. Required for maintenance of the Golgi apparatus organization. May play a role in membrane tubulation. In Mus musculus (Mouse), this protein is Pleckstrin homology domain-containing family M member 2.